A 281-amino-acid chain; its full sequence is MGENMIKSEDLVFKYVNAEEQTEKVAINHVSMEVKKGEFLVILGHNGSGKSTMAKHMNALLLPSGGKMYVDGLDTSDIENLWEVRRRAGMVFQNPDNQLVATIVEEDVAFGPENLGVDPKEIRERVDDSLKAVGMYEYRKHAPHLLSGGQKQRIAIAGILAMRPKCIVLDEPTAMLDPSGRNEVMKTIKEVNKKFGITIILITHYMDEAAQADRIIVMDKGEKVMEGVPREIFSQVEKIKSIGLDVPQVTELAYELQKEGVDISTEILNIDEMVNALCQLK.

The ABC transporter domain maps to 6-245 (IKSEDLVFKY…VEKIKSIGLD (240 aa)). 44–51 (GHNGSGKS) lines the ATP pocket.

Belongs to the ABC transporter superfamily. Energy-coupling factor EcfA family. As to quaternary structure, forms a stable energy-coupling factor (ECF) transporter complex composed of 2 membrane-embedded substrate-binding proteins (S component), 2 ATP-binding proteins (A component) and 2 transmembrane proteins (T component).

The protein resides in the cell membrane. In terms of biological role, ATP-binding (A) component of a common energy-coupling factor (ECF) ABC-transporter complex. Unlike classic ABC transporters this ECF transporter provides the energy necessary to transport a number of different substrates. This chain is Energy-coupling factor transporter ATP-binding protein EcfA1, found in Clostridium perfringens (strain ATCC 13124 / DSM 756 / JCM 1290 / NCIMB 6125 / NCTC 8237 / Type A).